A 551-amino-acid chain; its full sequence is Hydroxylamine reductase (551 aa).

Positions 3, 6, 18, and 25 each coordinate [2Fe-2S] cluster. Positions 249, 273, 317, 405, 433, 459, 493, and 495 each coordinate hybrid [4Fe-2O-2S] cluster. C405 carries the cysteine persulfide modification.

The protein belongs to the HCP family. It depends on [2Fe-2S] cluster as a cofactor. Hybrid [4Fe-2O-2S] cluster serves as cofactor.

The protein localises to the cytoplasm. The enzyme catalyses A + NH4(+) + H2O = hydroxylamine + AH2 + H(+). Its function is as follows. Catalyzes the reduction of hydroxylamine to form NH(3) and H(2)O. The protein is Hydroxylamine reductase of Actinobacillus pleuropneumoniae serotype 5b (strain L20).